We begin with the raw amino-acid sequence, 317 residues long: Olfactory receptor 2B11 (317 aa).

At 1–29 the chain is on the extracellular side; sequence MKSDNHSFLGDSPKAFILLGVSDRPWLEL. Asparagine 5 carries an N-linked (GlcNAc...) asparagine glycan. Residues 30 to 53 form a helical membrane-spanning segment; the sequence is PLFVVLLLSYVLAMLGNVAIILAS. The Cytoplasmic portion of the chain corresponds to 54–61; that stretch reads RVDPQLHS. Residues 62 to 83 form a helical membrane-spanning segment; it reads PMYIFLSHLSFLDLCYTTTTVP. The Extracellular portion of the chain corresponds to 84-104; sequence QMLVNMGSSQKTISYGGCTVQ. Residues cysteine 101 and cysteine 193 are joined by a disulfide bond. The helical transmembrane segment at 105-124 threads the bilayer; that stretch reads YAVFHWLGCTECIVLAAMAL. The Cytoplasmic segment spans residues 125 to 143; the sequence is DRYVAICKPLHYAVLMHRA. Residues 144–162 form a helical membrane-spanning segment; that stretch reads LCQQLVALAWLSGFGNSFV. At 163–199 the chain is on the extracellular side; that stretch reads QVVLTVQLPFCGRQVLNNFFCEVPAVIKLSCADTAVN. Residue asparagine 199 is glycosylated (N-linked (GlcNAc...) asparagine). The chain crosses the membrane as a helical span at residues 200–223; sequence DTILAVLVAFFVLVPLALILLSYG. Over 224 to 240 the chain is Cytoplasmic; that stretch reads FIARAVLRIQSSKGRHK. The helical transmembrane segment at 241-263 threads the bilayer; it reads AFGTCSSHLMIVSLFYLPAIYMY. Topologically, residues 264–276 are extracellular; that stretch reads LQPPSSYSQEQGK. Residues 277-296 form a helical membrane-spanning segment; that stretch reads FISLFYSIITPTLNPFTYTL. At 297–317 the chain is on the cytoplasmic side; it reads RNKDMKGALRRLLARIWRLCG.

It belongs to the G-protein coupled receptor 1 family.

It localises to the cell membrane. Its function is as follows. Odorant receptor. The sequence is that of Olfactory receptor 2B11 (OR2B11) from Homo sapiens (Human).